The primary structure comprises 156 residues: Small ribosomal subunit protein uS7 (156 aa).

The protein belongs to the universal ribosomal protein uS7 family. In terms of assembly, part of the 30S ribosomal subunit. Contacts proteins S9 and S11.

In terms of biological role, one of the primary rRNA binding proteins, it binds directly to 16S rRNA where it nucleates assembly of the head domain of the 30S subunit. Is located at the subunit interface close to the decoding center, probably blocks exit of the E-site tRNA. This chain is Small ribosomal subunit protein uS7, found in Carboxydothermus hydrogenoformans (strain ATCC BAA-161 / DSM 6008 / Z-2901).